The chain runs to 380 residues: MGIKGLSQLIADLAPFAVKEGEIKNFFGRKVAIDASMCLYQFLIAVRAEGAQLTSVDGETTSHLMGTFYRTIRLLENGIKPVYVFDGKPPDLKSGELTKRAEKREEAQKALDKATEAGVTEDIDKFNRRLVKVTKQHSNEAKELLKLMGVPYVDAPCEAEAQCAALVKGGKVYATATEDMDALTFGSNILLRHLTFSEARKMPVQEFNYDKILQGLELTRDEFIDLCILLGCDYCDSIRGIGPKKAVELINKHRTIEKILENLDTKKYVVPENWNYQQARVLFKEPEVANPEEVELKWGEPDEEGLVKYLCGDRQFNEDRIRAGAKKILKTKSTATQGRLDSFFKVLPSTPNPKRKIEDKKTPASKKAKTTGGKPGRKPK.

Positions 1–104 (MGIKGLSQLI…GELTKRAEKR (104 aa)) are N-domain. Mg(2+) is bound at residue Asp-34. Arg-47 and Arg-70 together coordinate DNA. Mg(2+) contacts are provided by Asp-86, Glu-158, Glu-160, Asp-179, and Asp-181. The tract at residues 122–253 (DIDKFNRRLV…KKAVELINKH (132 aa)) is I-domain. Glu-158 is a DNA binding site. Residues Gly-231 and Asp-233 each contribute to the DNA site. Asp-233 is a Mg(2+) binding site. Residues 336 to 344 (TQGRLDSFF) form an interaction with PCNA region. The interval 342–380 (SFFKVLPSTPNPKRKIEDKKTPASKKAKTTGGKPGRKPK) is disordered. Residues 363-380 (PASKKAKTTGGKPGRKPK) are compositionally biased toward basic residues.

The protein belongs to the XPG/RAD2 endonuclease family. FEN1 subfamily. In terms of assembly, interacts with PCNA. Three molecules of FEN1 bind to one PCNA trimer with each molecule binding to one PCNA monomer. PCNA stimulates the nuclease activity without altering cleavage specificity. Mg(2+) serves as cofactor. In terms of processing, phosphorylated. Phosphorylation upon DNA damage induces relocalization to the nuclear plasma.

It localises to the nucleus. It is found in the nucleolus. The protein localises to the nucleoplasm. Its subcellular location is the mitochondrion. In terms of biological role, structure-specific nuclease with 5'-flap endonuclease and 5'-3' exonuclease activities involved in DNA replication and repair. During DNA replication, cleaves the 5'-overhanging flap structure that is generated by displacement synthesis when DNA polymerase encounters the 5'-end of a downstream Okazaki fragment. It enters the flap from the 5'-end and then tracks to cleave the flap base, leaving a nick for ligation. Also involved in the long patch base excision repair (LP-BER) pathway, by cleaving within the apurinic/apyrimidinic (AP) site-terminated flap. Acts as a genome stabilization factor that prevents flaps from equilibrating into structures that lead to duplications and deletions. Also possesses 5'-3' exonuclease activity on nicked or gapped double-stranded DNA, and exhibits RNase H activity. Also involved in replication and repair of rDNA and in repairing mitochondrial DNA. This chain is Flap endonuclease 1, found in Aedes aegypti (Yellowfever mosquito).